Here is a 213-residue protein sequence, read N- to C-terminus: Methylthioribulose-1-phosphate dehydratase (213 aa).

The Zn(2+) site is built by His104 and His106.

Belongs to the aldolase class II family. MtnB subfamily. The cofactor is Zn(2+).

The enzyme catalyses 5-(methylsulfanyl)-D-ribulose 1-phosphate = 5-methylsulfanyl-2,3-dioxopentyl phosphate + H2O. It functions in the pathway amino-acid biosynthesis; L-methionine biosynthesis via salvage pathway; L-methionine from S-methyl-5-thio-alpha-D-ribose 1-phosphate: step 2/6. In terms of biological role, catalyzes the dehydration of methylthioribulose-1-phosphate (MTRu-1-P) into 2,3-diketo-5-methylthiopentyl-1-phosphate (DK-MTP-1-P). The protein is Methylthioribulose-1-phosphate dehydratase of Stenotrophomonas maltophilia (strain K279a).